Reading from the N-terminus, the 76-residue chain is Kappa-actitoxin-Avd4e (76 aa).

Positions 1–19 (MNKALFLCLVVLCAAVVFA) are cleaved as a signal peptide. The propeptide occupies 20 to 31 (AEDLQKAKHAPF). Intrachain disulfides connect Cys37/Cys72, Cys39/Cys65, and Cys55/Cys73. The Cell attachment site motif lies at 45 to 47 (RGD).

Belongs to the sea anemone type 3 (BDS) potassium channel toxin family. Moderately expressed in the ectodermal tissue from the distal and proximal tentacles, body wall, and oral disk.

The protein localises to the secreted. The protein resides in the nematocyst. Functionally, is member of a fraction that shows antiangiogenic activity, since it inhibits human microvascular endothelial cells (HMEC) tubulogenesis. This protein could be a kunitz-type inhibitor with a RGD motif that could block angiogenesis in binding on integrins. Blocks Kv3 voltage-gated potassium channels. Reduces blood pressure. In Anemonia viridis (Snakelocks anemone), this protein is Kappa-actitoxin-Avd4e.